The chain runs to 527 residues: Laccase-5 (527 aa).

Residues methionine 1–glycine 23 form the signal peptide. The 126-residue stretch at isoleucine 25 to tyrosine 150 folds into the Plastocyanin-like 1 domain. Asparagine 74 and asparagine 77 each carry an N-linked (GlcNAc...) asparagine glycan. Cu cation contacts are provided by histidine 87, histidine 89, histidine 132, and histidine 134. 2 disulfides stabilise this stretch: cysteine 108–cysteine 516 and cysteine 140–cysteine 230. 10 N-linked (GlcNAc...) asparagine glycosylation sites follow: asparagine 156, asparagine 209, asparagine 233, asparagine 242, asparagine 276, asparagine 317, asparagine 358, asparagine 366, asparagine 393, and asparagine 402. The 145-residue stretch at valine 162–tyrosine 306 folds into the Plastocyanin-like 2 domain. The region spanning threonine 373–aspartate 498 is the Plastocyanin-like 3 domain. The Cu cation site is built by histidine 425, histidine 428, histidine 430, histidine 480, cysteine 481, histidine 482, and histidine 486.

The protein belongs to the multicopper oxidase family. Requires Cu cation as cofactor.

It is found in the secreted. The catalysed reaction is 4 hydroquinone + O2 = 4 benzosemiquinone + 2 H2O. Functionally, lignin degradation and detoxification of lignin-derived products. In Trametes versicolor (White-rot fungus), this protein is Laccase-5 (LCC5).